A 411-amino-acid polypeptide reads, in one-letter code: Ornithine cyclodeaminase (411 aa).

10 residues coordinate NAD(+): Asn-236, Ala-237, Asp-315, Thr-347, Met-348, Leu-349, His-350, Asp-368, Asp-391, and Val-392.

Belongs to the AgrE/ArgZ ornithine cyclodeaminase family. Requires NAD(+) as cofactor.

It carries out the reaction L-ornithine = L-proline + NH4(+). Functionally, catalyzes the conversion of ornithine to proline, with the release of ammonia. The chain is Ornithine cyclodeaminase from Methanothermobacter thermautotrophicus (strain ATCC 29096 / DSM 1053 / JCM 10044 / NBRC 100330 / Delta H) (Methanobacterium thermoautotrophicum).